The chain runs to 79 residues: Sec-independent protein translocase protein TatA (79 aa).

Residues 1–21 form a helical membrane-spanning segment; the sequence is MGSLSIWHWIVVIAVVLLLFG. Basic and acidic residues predominate over residues 43-60; the sequence is LQDDEKTAEKPDPVKSID. A disordered region spans residues 43 to 79; sequence LQDDEKTAEKPDPVKSIDHNAPTAAAPTRTDVGSKAV.

The protein belongs to the TatA/E family. The Tat system comprises two distinct complexes: a TatABC complex, containing multiple copies of TatA, TatB and TatC subunits, and a separate TatA complex, containing only TatA subunits. Substrates initially bind to the TatABC complex, which probably triggers association of the separate TatA complex to form the active translocon.

Its subcellular location is the cell inner membrane. In terms of biological role, part of the twin-arginine translocation (Tat) system that transports large folded proteins containing a characteristic twin-arginine motif in their signal peptide across membranes. TatA could form the protein-conducting channel of the Tat system. The protein is Sec-independent protein translocase protein TatA of Rhodopseudomonas palustris (strain BisB5).